A 325-amino-acid polypeptide reads, in one-letter code: NADH-quinone oxidoreductase subunit H (325 aa).

The next 8 helical transmembrane spans lie at 11–31 (ILIS…CGAF), 81–101 (AIFT…FAIV), 114–134 (IGIL…LFAG), 154–174 (LSYE…AGSF), 186–206 (VWNV…GVAV), 237–257 (FFVG…TLFF), 265–285 (LPPF…FILI), and 304–324 (VCLP…LYNA).

It belongs to the complex I subunit 1 family. In terms of assembly, NDH-1 is composed of 13 different subunits. Subunits NuoA, H, J, K, L, M, N constitute the membrane sector of the complex.

It localises to the cell inner membrane. It carries out the reaction a quinone + NADH + 5 H(+)(in) = a quinol + NAD(+) + 4 H(+)(out). NDH-1 shuttles electrons from NADH, via FMN and iron-sulfur (Fe-S) centers, to quinones in the respiratory chain. The immediate electron acceptor for the enzyme in this species is believed to be ubiquinone. Couples the redox reaction to proton translocation (for every two electrons transferred, four hydrogen ions are translocated across the cytoplasmic membrane), and thus conserves the redox energy in a proton gradient. This subunit may bind ubiquinone. This Yersinia pseudotuberculosis serotype O:1b (strain IP 31758) protein is NADH-quinone oxidoreductase subunit H.